The following is a 394-amino-acid chain: HORMA domain-containing protein 1 (394 aa).

One can recognise an HORMA domain in the interval 24 to 226; sequence QQSLVLVKRL…TPFHTFKVKV (203 aa). A disordered region spans residues 306–394; the sequence is KESPELSISH…RKFSEPKEHI (89 aa). A compositionally biased stretch (polar residues) spans 311–325; that stretch reads LSISHSQVEQLVSKT. The span at 353–362 shows a compositional bias: basic and acidic residues; sequence KSKESRKRSQ. Ser376 is modified (phosphoserine). A Nuclear localization signal motif is present at residues 383-386; that stretch reads KRRK.

In terms of assembly, interacts with HORMAD2. Interacts with IHO1. Phosphorylated at Ser-377 in a SPO11-dependent manner.

Its subcellular location is the nucleus. It localises to the chromosome. Plays a key role in meiotic progression. Regulates 3 different functions during meiosis: ensures that sufficient numbers of processed DNA double-strand breaks (DSBs) are available for successful homology search by increasing the steady-state numbers of single-stranded DSB ends. Promotes synaptonemal-complex formation independently of its role in homology search. Plays a key role in the male mid-pachytene checkpoint and the female meiotic prophase checkpoint: required for efficient build-up of ATR activity on unsynapsed chromosome regions, a process believed to form the basis of meiotic silencing of unsynapsed chromatin (MSUC) and meiotic prophase quality control in both sexes. In Sus scrofa (Pig), this protein is HORMA domain-containing protein 1 (HORMAD1).